A 640-amino-acid polypeptide reads, in one-letter code: Zinc finger and BTB domain-containing protein 22 (640 aa).

Positions 57 to 121 (CDVSIRVQGR…AYTGRLSMAA (65 aa)) constitute a BTB domain. 3 disordered regions span residues 191–244 (RSHA…PVFP), 308–327 (PAPA…EEED), and 332–482 (CEDD…GGTG). The segment covering 192–210 (SHASSRASENQSPSSSNYF) has biased composition (polar residues). Serine 203 is modified (phosphoserine). A compositionally biased stretch (acidic residues) spans 318 to 327 (PDLEEDEEED). Residues 431–442 (SSSSSSSSSSSS) are compositionally biased toward low complexity. A compositionally biased stretch (gly residues) spans 469–482 (GMPGGPGGTPGGTG). The segment at 490 to 511 (FLCHCGKAFSHKSMRDRHVNMH) adopts a C2H2-type 1; atypical zinc-finger fold. 2 consecutive C2H2-type zinc fingers follow at residues 517–539 (FDCP…MKTH) and 545–571 (YECG…ERRH). The segment at 571-640 (HRLVGGGGGG…MGFGGGGGTN (70 aa)) is disordered. Residues 574 to 588 (VGGGGGGGPGPGGPT) show a composition bias toward gly residues.

This sequence belongs to the krueppel C2H2-type zinc-finger protein family.

The protein resides in the nucleus. Functionally, may be involved in transcriptional regulation. This is Zinc finger and BTB domain-containing protein 22 (ZBTB22) from Canis lupus familiaris (Dog).